We begin with the raw amino-acid sequence, 450 residues long: Tubulin beta chain (450 aa).

Residues Glu69, Ser138, Gly142, Thr143, Gly144, Asn204, and Asn226 each coordinate GTP. A Mg(2+)-binding site is contributed by Glu69. Residues 427 to 450 (DATIDQEFEDEEEVEEQNDDSDEQ) form a disordered region. The span at 430-450 (IDQEFEDEEEVEEQNDDSDEQ) shows a compositional bias: acidic residues.

It belongs to the tubulin family. As to quaternary structure, dimer of alpha and beta chains. A typical microtubule is a hollow water-filled tube with an outer diameter of 25 nm and an inner diameter of 15 nM. Alpha-beta heterodimers associate head-to-tail to form protofilaments running lengthwise along the microtubule wall with the beta-tubulin subunit facing the microtubule plus end conferring a structural polarity. Microtubules usually have 13 protofilaments but different protofilament numbers can be found in some organisms and specialized cells. The cofactor is Mg(2+).

Its subcellular location is the cytoplasm. It is found in the cytoskeleton. Its function is as follows. Tubulin is the major constituent of microtubules, a cylinder consisting of laterally associated linear protofilaments composed of alpha- and beta-tubulin heterodimers. Microtubules grow by the addition of GTP-tubulin dimers to the microtubule end, where a stabilizing cap forms. Below the cap, tubulin dimers are in GDP-bound state, owing to GTPase activity of alpha-tubulin. This Bombyx mori (Silk moth) protein is Tubulin beta chain.